The chain runs to 118 residues: Holo-[acyl-carrier-protein] synthase (118 aa).

Residues Asp8 and Glu58 each contribute to the Mg(2+) site.

Belongs to the P-Pant transferase superfamily. AcpS family. Mg(2+) is required as a cofactor.

The protein resides in the cytoplasm. The enzyme catalyses apo-[ACP] + CoA = holo-[ACP] + adenosine 3',5'-bisphosphate + H(+). Its function is as follows. Transfers the 4'-phosphopantetheine moiety from coenzyme A to a Ser of acyl-carrier-protein. The polypeptide is Holo-[acyl-carrier-protein] synthase (Listeria innocua serovar 6a (strain ATCC BAA-680 / CLIP 11262)).